The chain runs to 22 residues: Zinc finger protein 326 (22 aa).

Positions 1–22 (QGYGFNEPEQTRNQGGSSWEAP) are disordered. The span at 11 to 22 (TRNQGGSSWEAP) shows a compositional bias: polar residues.

Belongs to the AKAP95 family.

Its subcellular location is the nucleus matrix. In terms of biological role, probable transcriptional activator which may play a role in neuronal differentiation. Able to bind DNA and activate expression in vitro. This Rattus norvegicus (Rat) protein is Zinc finger protein 326 (Znf326).